We begin with the raw amino-acid sequence, 208 residues long: Imidazoleglycerol-phosphate dehydratase (208 aa).

Belongs to the imidazoleglycerol-phosphate dehydratase family.

The protein resides in the cytoplasm. The enzyme catalyses D-erythro-1-(imidazol-4-yl)glycerol 3-phosphate = 3-(imidazol-4-yl)-2-oxopropyl phosphate + H2O. It participates in amino-acid biosynthesis; L-histidine biosynthesis; L-histidine from 5-phospho-alpha-D-ribose 1-diphosphate: step 6/9. This is Imidazoleglycerol-phosphate dehydratase from Psychrobacter sp. (strain PRwf-1).